The sequence spans 364 residues: NAC transcription factor 56 (364 aa).

The segment at 1-23 (MESTDSSGGPPPPQPNLPPGFRF) is disordered. Positions 9 to 18 (GPPPPQPNLP) are enriched in pro residues. One can recognise an NAC domain in the interval 17 to 178 (LPPGFRFHPT…DWVLCRIYKK (162 aa)). Residues 116-184 (VGVKKALVFY…IYKKNNASRH (69 aa)) mediate DNA binding.

In terms of tissue distribution, stamen specific, in anthers from stage 8. Expressed in the outer integument, but seems not expressed in the embryo at the torpedo stage.

It is found in the nucleus. In terms of biological role, transcription factor of the NAC family. Together with NAC018/NARS2, regulates embryogenesis by regulating the development and degeneration of ovule integuments, a process required for intertissue communication between the embryo and the maternal integument. The protein is NAC transcription factor 56 of Arabidopsis thaliana (Mouse-ear cress).